We begin with the raw amino-acid sequence, 621 residues long: MADFEELRNMVSSFRVSELQVLLGFAGRNKSGRKHDLLMRALHLLKSGCSPAVQIKIRELYRRRYPRTLEGLCDLSTIKSSVFSLDGSSSPVEPDLPVAGIHSLPSTSITPHSPSSPVGSVLLQDTKPTFEMQQPSPPIPPVHPDVQLKNLPFYDVLDVLIKPTSLVQSSIQRFQEKFFIFALTPQQVREICISRDFLPGGRRDYTVQVQLRLCLAETSCPQEDNYPNSLCIKVNGKLFPLPGYAPPPKNGIEQKRPGRPLNITSLVRLSSAVPNQISISWASEIGKNYSMSVYLVRQLTSAMLLQRLKMKGIRNPDHSRALIKEKLTADPDSEIATTSLRVSLMCPLGKMRLTIPCRAVTCTHLQCFDAALYLQMNEKKPTWICPVCDKKAAYESLILDGLFMEILNDCSDVDEIKFQEDGSWCPMRPKKEAMKVTSQPCTKVESSSVFSKPCSVTVASDASKKKIDVIDLTIESSSDEEEDPPAKRKCIFMSETQSSPTKGVLMYQPSSVRVPSVTSVDPAAIPPSLTDYSVPFHHTPVSSMSSDLPGLDFLSLIPVDPQYCPPMFLDSLTSPLTASSTSVTTTSPHESSTHVSSSSSRSETGVITSSGRNIPDIISLD.

The region spanning 11-45 (VSSFRVSELQVLLGFAGRNKSGRKHDLLMRALHLL) is the SAP domain. An LXXLL motif motif is present at residues 19–23 (LQVLL). Glycyl lysine isopeptide (Lys-Gly) (interchain with G-Cter in SUMO2) cross-links involve residues Lys-46 and Lys-249. A PINIT domain is found at 134 to 299 (QPSPPIPPVH…SMSVYLVRQL (166 aa)). An SP-RING-type zinc finger spans residues 331-412 (PDSEIATTSL…FMEILNDCSD (82 aa)). Positions 362, 364, 385, and 388 each coordinate Zn(2+). Glycyl lysine isopeptide (Lys-Gly) (interchain with G-Cter in SUMO2) cross-links involve residues Lys-430, Lys-435, Lys-443, and Lys-452. The interval 467–473 (IDVIDLT) is SUMO1-binding. A phosphoserine mark is found at Ser-476, Ser-477, and Ser-478. The Nuclear localization signal signature appears at 484 to 492 (PPAKRKCIF). Lys-489 participates in a covalent cross-link: Glycyl lysine isopeptide (Lys-Gly) (interchain with G-Cter in SUMO2). The residue at position 499 (Ser-499) is a Phosphoserine. Lys-502 is covalently cross-linked (Glycyl lysine isopeptide (Lys-Gly) (interchain with G-Cter in SUMO2)). Low complexity predominate over residues 577 to 610 (TASSTSVTTTSPHESSTHVSSSSSRSETGVITSS). Positions 577 to 621 (TASSTSVTTTSPHESSTHVSSSSSRSETGVITSSGRNIPDIISLD) are disordered.

Belongs to the PIAS family. As to quaternary structure, binds SUMO1 and UBE2I. Interacts with AXIN1, JUN, MDM2, PARK7, TP53 and TP73 isoform alpha, but not TP73 isoform beta. Interacts with STAT4 following IL12 and IFN-alpha stimulation of T-cells. Interacts also with GTF2I, GTF2IRD1, IKFZ1, DAB2 and MSX2, as well as with several steroid receptors, including ESR1, ESR2, NR3C1, PGR, AR, and with NCOA2. Sumoylation of a target protein seems to enhance the interaction. Binds to sumoylated ELK1. Interacts with PLAG1. Binds DNA, such as CDKN1A promoter, in a sequence-specific manner. Interacts with KLF8; the interaction results in SUMO ligation and repression of KLF8 transcriptional activity and of its cell cycle progression into G(1) phase. Interacts with IFIH1/MDA5. Interacts with PML. Interacts with PRDM1. Post-translationally, sumoylated.

It is found in the nucleus speckle. The protein resides in the nucleus. The protein localises to the PML body. The catalysed reaction is S-ubiquitinyl-[E2 ubiquitin-conjugating enzyme]-L-cysteine + [acceptor protein]-L-lysine = [E2 ubiquitin-conjugating enzyme]-L-cysteine + N(6)-ubiquitinyl-[acceptor protein]-L-lysine.. It participates in protein modification; protein sumoylation. Its function is as follows. Functions as an E3-type small ubiquitin-like modifier (SUMO) ligase, stabilizing the interaction between UBE2I and the substrate, and as a SUMO-tethering factor. Plays a crucial role as a transcriptional coregulation in various cellular pathways, including the STAT pathway, the p53 pathway and the steroid hormone signaling pathway. The effects of this transcriptional coregulation, transactivation or silencing may vary depending upon the biological context and PIAS2 isoform studied. However, it seems to be mostly involved in gene silencing. Binds to sumoylated ELK1 and enhances its transcriptional activity by preventing recruitment of HDAC2 by ELK1, thus reversing SUMO-mediated repression of ELK1 transactivation activity. Isoform PIASx-beta, but not isoform PIASx-alpha, promotes MDM2 sumoylation. Isoform PIASx-alpha promotes PARK7 sumoylation. Isoform PIASx-beta promotes NCOA2 sumoylation more efficiently than isoform PIASx-alpha. Sumoylates PML at'Lys-65' and 'Lys-160'. The protein is E3 SUMO-protein ligase PIAS2 (Pias2) of Mus musculus (Mouse).